The chain runs to 423 residues: UPF0229 protein Pfl01_5140 (423 aa).

Residues 83-108 (TAGEHIARPPGGGGGRGPGKAGNSGE) form a disordered region. Residues 92-107 (PGGGGGRGPGKAGNSG) show a composition bias toward gly residues.

Belongs to the UPF0229 family.

The sequence is that of UPF0229 protein Pfl01_5140 from Pseudomonas fluorescens (strain Pf0-1).